Consider the following 427-residue polypeptide: Serine--tRNA ligase (427 aa).

231-233 (TAE) contributes to the L-serine binding site. 262-264 (RSE) is an ATP binding site. Glu285 contacts L-serine. 349–352 (EISS) contributes to the ATP binding site. L-serine is bound at residue Ser385.

This sequence belongs to the class-II aminoacyl-tRNA synthetase family. Type-1 seryl-tRNA synthetase subfamily. In terms of assembly, homodimer. The tRNA molecule binds across the dimer.

The protein localises to the cytoplasm. The catalysed reaction is tRNA(Ser) + L-serine + ATP = L-seryl-tRNA(Ser) + AMP + diphosphate + H(+). It catalyses the reaction tRNA(Sec) + L-serine + ATP = L-seryl-tRNA(Sec) + AMP + diphosphate + H(+). Its pathway is aminoacyl-tRNA biosynthesis; selenocysteinyl-tRNA(Sec) biosynthesis; L-seryl-tRNA(Sec) from L-serine and tRNA(Sec): step 1/1. Functionally, catalyzes the attachment of serine to tRNA(Ser). Is also able to aminoacylate tRNA(Sec) with serine, to form the misacylated tRNA L-seryl-tRNA(Sec), which will be further converted into selenocysteinyl-tRNA(Sec). This is Serine--tRNA ligase from Brucella melitensis biotype 2 (strain ATCC 23457).